Here is a 270-residue protein sequence, read N- to C-terminus: Sulfur carrier protein FdhD (270 aa).

Cys-116 serves as the catalytic Cysteine persulfide intermediate. 253–258 contributes to the Mo-bis(molybdopterin guanine dinucleotide) binding site; that stretch reads FAREGK.

This sequence belongs to the FdhD family.

Its subcellular location is the cytoplasm. Required for formate dehydrogenase (FDH) activity. Acts as a sulfur carrier protein that transfers sulfur from IscS to the molybdenum cofactor prior to its insertion into FDH. The sequence is that of Sulfur carrier protein FdhD from Haemophilus influenzae (strain ATCC 51907 / DSM 11121 / KW20 / Rd).